The primary structure comprises 149 residues: Large-conductance mechanosensitive channel (149 aa).

Helical transmembrane passes span 16–36 (VMDL…VNSV), 40–60 (LIMP…KFIL), and 89–109 (GSFI…FMMV).

This sequence belongs to the MscL family. In terms of assembly, homopentamer.

It localises to the cell inner membrane. Functionally, channel that opens in response to stretch forces in the membrane lipid bilayer. May participate in the regulation of osmotic pressure changes within the cell. This chain is Large-conductance mechanosensitive channel, found in Paraburkholderia phymatum (strain DSM 17167 / CIP 108236 / LMG 21445 / STM815) (Burkholderia phymatum).